The sequence spans 520 residues: Maturase K (520 aa).

This sequence belongs to the intron maturase 2 family. MatK subfamily.

The protein localises to the plastid. Its subcellular location is the chloroplast. Functionally, usually encoded in the trnK tRNA gene intron. Probably assists in splicing its own and other chloroplast group II introns. This is Maturase K from Linum perenne (Perennial flax).